We begin with the raw amino-acid sequence, 576 residues long: Epsin-1 (576 aa).

Residues arginine 8, lysine 11, arginine 25, asparagine 30, arginine 63, and histidine 73 each contribute to the a 1,2-diacyl-sn-glycero-3-phospho-(1D-myo-inositol-4,5-bisphosphate) site. One can recognise an ENTH domain in the interval 12–144 (NIVHNYSEAE…RDEDRLREER (133 aa)). Residues 149–185 (KTKEKLAQTATASSAAVGSGPPPEAEQAWPQSSGEEE) form a disordered region. The segment covering 157-167 (TATASSAAVGS) has biased composition (low complexity). 3 consecutive UIM domains span residues 183 to 202 (EEEL…ADQP), 208 to 227 (EDDA…HDKE), and 233 to 252 (GDDL…TGGK). Residues 265-296 (TAPAPAPTTDPWGGPAPMAAAVPTAAPTSDPW) are compositionally biased toward low complexity. Positions 265–404 (TAPAPAPTTD…GGFDTEPDEF (140 aa)) are disordered. A run of 8 repeats spans residues 274–276 (DPW), 294–296 (DPW), 306–308 (DPW), 319–321 (DPW), 332–334 (DPW), 349–351 (DPW), 367–369 (DPW), and 377–379 (DPW). Residues 274 to 379 (DPWGGPAPMA…TPAPAFSDPW (106 aa)) form an 8 X 3 AA repeats of [ED]-P-W region. The segment covering 297–314 (GGPPVPPAADPWGGPAPT) has biased composition (pro residues). A compositionally biased stretch (low complexity) spans 332 to 368 (DPWGGTPAPAAGEGPTPDPWGSSDGGVPVSGPSASDP). Serine 382 bears the Phosphoserine; by CDK1 mark. The [DE]-X(1,2)-F-X-X-[FL]-X-X-X-R motif signature appears at 402–411 (DEFSDFDRLR). 5 positions are modified to phosphoserine: serine 419, serine 420, serine 435, serine 447, and serine 454. Residues 448 to 576 (LAEAVGSPPP…PAPNTNPFLL (129 aa)) form a disordered region. Residues 454 to 468 (SPPPAATPTPTPPTR) are compositionally biased toward pro residues. 3 positions are modified to phosphothreonine: threonine 460, threonine 464, and threonine 470. Serine 473 bears the Phosphoserine mark. Threonine 494 is modified (phosphothreonine). 2 tandem repeats follow at residues 502 to 504 (NPF) and 518 to 520 (NPF). The 3 X 3 AA repeats of N-P-F stretch occupies residues 502–574 (NPFLPGGGPA…GPPAPNTNPF (73 aa)). Position 534 is an omega-N-methylarginine (arginine 534). Residues 557 to 570 (GLPPMMPPGPPAPN) show a composition bias toward pro residues. The stretch at 572–574 (NPF) is repeat 3.

This sequence belongs to the epsin family. Monomer. Binds clathrin, ZBTB16/ZNF145 and ITSN1. Binds ubiquitinated proteins. Binds AP2A1 and AP2A2. Interacts with RALBP1 in a complex also containing NUMB and TFAP2A during interphase and mitosis. Interacts with AP2B1. Interacts with UBQLN2. Interacts with REPS2; the interaction is direct. Interacts with EPS15; the interaction is direct. Interacts with ENTREP1. In terms of processing, phosphorylated on serine and/or threonine residues in mitotic cells. Phosphorylation reduces interaction with REPS2, AP-2 and the membrane fraction. Depolarization of synaptosomes results in dephosphorylation. Post-translationally, ubiquitinated.

It localises to the cytoplasm. The protein resides in the cell membrane. The protein localises to the nucleus. Its subcellular location is the membrane. It is found in the clathrin-coated pit. Binds to membranes enriched in phosphatidylinositol 4,5-bisphosphate (PtdIns(4,5)P2). Modifies membrane curvature and facilitates the formation of clathrin-coated invaginations. Regulates receptor-mediated endocytosis. The sequence is that of Epsin-1 (EPN1) from Homo sapiens (Human).